The chain runs to 123 residues: Small ribosomal subunit protein uS12cz/uS12cy (123 aa).

This sequence belongs to the universal ribosomal protein uS12 family. Part of the 30S ribosomal subunit.

The protein localises to the plastid. It localises to the chloroplast. Functionally, with S4 and S5 plays an important role in translational accuracy. Located at the interface of the 30S and 50S subunits. This chain is Small ribosomal subunit protein uS12cz/uS12cy (rps12-A), found in Psilotum nudum (Whisk fern).